The following is a 139-amino-acid chain: Large ribosomal subunit protein uL22 (139 aa).

Residues 1–22 are disordered; the sequence is MVSENEKTRRPKRSIQHRQNKD. Positions 9 to 18 are enriched in basic residues; sequence RRPKRSIQHR.

It belongs to the universal ribosomal protein uL22 family. Part of the 50S ribosomal subunit.

In terms of biological role, this protein binds specifically to 23S rRNA; its binding is stimulated by other ribosomal proteins, e.g. L4, L17, and L20. It is important during the early stages of 50S assembly. It makes multiple contacts with different domains of the 23S rRNA in the assembled 50S subunit and ribosome. Its function is as follows. The globular domain of the protein is located near the polypeptide exit tunnel on the outside of the subunit, while an extended beta-hairpin is found that lines the wall of the exit tunnel in the center of the 70S ribosome. This is Large ribosomal subunit protein uL22 from Pseudothermotoga lettingae (strain ATCC BAA-301 / DSM 14385 / NBRC 107922 / TMO) (Thermotoga lettingae).